The sequence spans 97 residues: Large ribosomal subunit protein bL27 (97 aa).

Positions 1 to 12 are excised as a propeptide; the sequence is MLKMNLANLQLF. Residues 14–38 form a disordered region; it reads HKKGGGSTSNGRDSESKRLGAKAAD.

It belongs to the bacterial ribosomal protein bL27 family. In terms of processing, the N-terminus is cleaved by ribosomal processing cysteine protease Prp.

This Streptococcus mutans serotype c (strain ATCC 700610 / UA159) protein is Large ribosomal subunit protein bL27.